The sequence spans 92 residues: UPF0223 protein SP_1404 (92 aa).

The protein belongs to the UPF0223 family.

The protein is UPF0223 protein SP_1404 of Streptococcus pneumoniae serotype 4 (strain ATCC BAA-334 / TIGR4).